A 450-amino-acid chain; its full sequence is Exodeoxyribonuclease 7 large subunit (450 aa).

The protein belongs to the XseA family. In terms of assembly, heterooligomer composed of large and small subunits.

Its subcellular location is the cytoplasm. It carries out the reaction Exonucleolytic cleavage in either 5'- to 3'- or 3'- to 5'-direction to yield nucleoside 5'-phosphates.. Bidirectionally degrades single-stranded DNA into large acid-insoluble oligonucleotides, which are then degraded further into small acid-soluble oligonucleotides. This is Exodeoxyribonuclease 7 large subunit from Listeria monocytogenes serovar 1/2a (strain ATCC BAA-679 / EGD-e).